Consider the following 78-residue polypeptide: Small ribosomal subunit protein bS20 (78 aa).

This sequence belongs to the bacterial ribosomal protein bS20 family.

Its function is as follows. Binds directly to 16S ribosomal RNA. This Streptococcus pneumoniae serotype 2 (strain D39 / NCTC 7466) protein is Small ribosomal subunit protein bS20.